A 168-amino-acid chain; its full sequence is uncharacterized protein (168 aa).

2 disordered regions span residues 1–81 (MSSA…GRSW) and 119–150 (RDLSESASTGSENLSRKASNQSQSQGRLSTVA). Low complexity predominate over residues 7–34 (SRTSRSKATGASSSSISSSIRASPSSSS). A compositionally biased stretch (basic residues) spans 43-67 (TRRRRRRTGRRSTKRSIISPRRRRM). Residues 123 to 146 (ESASTGSENLSRKASNQSQSQGRL) show a composition bias toward polar residues.

This is an uncharacterized protein from Human adenovirus C serotype 2 (HAdV-2).